We begin with the raw amino-acid sequence, 216 residues long: FMN-dependent NADH:quinone oxidoreductase 3 (216 aa).

FMN contacts are provided by residues serine 10 and 16–18; that span reads SAS.

The protein belongs to the azoreductase type 1 family. As to quaternary structure, homodimer. The cofactor is FMN.

The catalysed reaction is 2 a quinone + NADH + H(+) = 2 a 1,4-benzosemiquinone + NAD(+). It catalyses the reaction N,N-dimethyl-1,4-phenylenediamine + anthranilate + 2 NAD(+) = 2-(4-dimethylaminophenyl)diazenylbenzoate + 2 NADH + 2 H(+). Quinone reductase that provides resistance to thiol-specific stress caused by electrophilic quinones. Its function is as follows. Also exhibits azoreductase activity. Catalyzes the reductive cleavage of the azo bond in aromatic azo compounds to the corresponding amines. The polypeptide is FMN-dependent NADH:quinone oxidoreductase 3 (Pseudomonas fluorescens (strain ATCC BAA-477 / NRRL B-23932 / Pf-5)).